We begin with the raw amino-acid sequence, 257 residues long: 5-oxoprolinase subunit A (257 aa).

The protein belongs to the LamB/PxpA family. As to quaternary structure, forms a complex composed of PxpA, PxpB and PxpC.

The enzyme catalyses 5-oxo-L-proline + ATP + 2 H2O = L-glutamate + ADP + phosphate + H(+). Catalyzes the cleavage of 5-oxoproline to form L-glutamate coupled to the hydrolysis of ATP to ADP and inorganic phosphate. The sequence is that of 5-oxoprolinase subunit A from Bacillus subtilis (strain 168).